The sequence spans 133 residues: Cytochrome c-type biogenesis protein CcmE (133 aa).

Over 1-7 the chain is Cytoplasmic; sequence MKKKHKR. The helical; Signal-anchor for type II membrane protein transmembrane segment at 8–28 threads the bilayer; the sequence is LLITSGIFCFLSCIVFFILTT. The Periplasmic segment spans residues 29–133; sequence LKENISFFYT…YMPKVLKQIP (105 aa). Residues His-120 and Tyr-124 each coordinate heme.

This sequence belongs to the CcmE/CycJ family.

It localises to the cell inner membrane. Heme chaperone required for the biogenesis of c-type cytochromes. Transiently binds heme delivered by CcmC and transfers the heme to apo-cytochromes in a process facilitated by CcmF and CcmH. This chain is Cytochrome c-type biogenesis protein CcmE, found in Wolbachia sp. subsp. Drosophila simulans (strain wRi).